The chain runs to 389 residues: 23S rRNA (uracil(747)-C(5))-methyltransferase RlmC (389 aa).

The [4Fe-4S] cluster site is built by Cys6, Cys14, Cys17, and Cys92. Gln217, Phe246, Glu273, and Asn319 together coordinate S-adenosyl-L-methionine. Cys346 (nucleophile) is an active-site residue.

The protein belongs to the class I-like SAM-binding methyltransferase superfamily. RNA M5U methyltransferase family. RlmC subfamily.

It carries out the reaction uridine(747) in 23S rRNA + S-adenosyl-L-methionine = 5-methyluridine(747) in 23S rRNA + S-adenosyl-L-homocysteine + H(+). Functionally, catalyzes the formation of 5-methyl-uridine at position 747 (m5U747) in 23S rRNA. This Glaesserella parasuis serovar 5 (strain SH0165) (Haemophilus parasuis) protein is 23S rRNA (uracil(747)-C(5))-methyltransferase RlmC.